The following is an 88-amino-acid chain: U13-theraphotoxin-Cg1a (88 aa).

Positions 1–21 (MKVSVLITLAVLGVMFVWASA) are cleaved as a signal peptide. Positions 22-52 (AELEQSGSDQKDSDSPAWLKSMERIFQSEER) are excised as a propeptide. Disulfide bonds link cysteine 54/cysteine 68, cysteine 61/cysteine 73, and cysteine 67/cysteine 80.

It belongs to the neurotoxin 10 (Hwtx-1) family. 41 (Jztx-36) subfamily. In terms of tissue distribution, expressed by the venom gland.

It localises to the secreted. In terms of biological role, probable ion channel inhibitor. In Chilobrachys guangxiensis (Chinese earth tiger tarantula), this protein is U13-theraphotoxin-Cg1a.